Here is a 422-residue protein sequence, read N- to C-terminus: Zinc finger and BTB domain-containing protein 42 (422 aa).

The region spanning 24–92 (CDCTVLVGDA…MYEGRLDLRS (69 aa)) is the BTB domain. Disordered stretches follow at residues 121 to 141 (KDRSLDPGNPAPGAEPAQPPC), 166 to 188 (AALPPRASGPPPCQVPEESDQAL), and 207 to 256 (LQTP…AAKG). The segment covering 243 to 252 (HSPPKPPPVP) has biased composition (pro residues). C2H2-type zinc fingers lie at residues 294-316 (CICPLCSKLFPSSHVLQLHLSAH), 334-356 (PTCPLCGKTFSCTYTLKRHERTH), 362-384 (YTCVQCGKSFQYSHNLSRHTVVH), and 390-413 (HACRWCERRFTQSGDLYRHVRKFH).

This sequence belongs to the krueppel C2H2-type zinc-finger protein family. ZBTB18 subfamily. Expressed in skeletal muscle (at protein level).

The protein localises to the cytoplasm. It is found in the nucleus. Its subcellular location is the nucleoplasm. Its function is as follows. Transcriptional repressor. Specifically binds DNA and probably acts by recruiting chromatin remodeling multiprotein complexes. This Homo sapiens (Human) protein is Zinc finger and BTB domain-containing protein 42 (ZBTB42).